We begin with the raw amino-acid sequence, 328 residues long: MSSIHKLLTGIYIHKNFLRPRAALPPFVGNHCVDYSSSSLQKKVTSVDRASQQGKTEEGLQGHDHKEVALDAPSPDRTPEVSFDKAIRDEAIEHFRRLKDEIVAHLRGPDGRPLQEVIMEQARVVWQFREKEDLDKWIVTSDKTIGGRSEIFLKMSKNNRSALLYGTLSSEPPQDGDSRQSGYCAMISRIPRGAFERKLSYDWSQFNTLYLRVRGDGRPWMVNIRQDTEFIQRKNQMYSYFMFTRGGPYWQEVKIPFSKFFFSNQGRVRDVQGPLVLDKISSIGFTLSDKVDGPFFLEIDFIGVFTDPAHTEEFAYENSPVLNPRLFR.

The transit peptide at 1–24 (MSSIHKLLTGIYIHKNFLRPRAAL) directs the protein to the mitochondrion. Residues 44–54 (VTSVDRASQQG) are compositionally biased toward polar residues. A disordered region spans residues 44 to 80 (VTSVDRASQQGKTEEGLQGHDHKEVALDAPSPDRTPE). The segment covering 55-69 (KTEEGLQGHDHKEVA) has biased composition (basic and acidic residues). Ser-319 is subject to Phosphoserine.

It belongs to the CIA30 family. Part of the mitochondrial complex I assembly/MCIA complex that comprises at least the core subunits TMEM126B, NDUFAF1, ECSIT and ACAD9 and complement subunits such as COA1 and TMEM186. Interacts with ECSIT. Interacts with ACAD9. At early stages of complex I assembly, it is found in intermediate subcomplexes that contain different subunits including NDUFB6, NDUFA6, NDUFA9, NDUFS3, NDUFS7, ND1, ND2 and ND3. Interacts with TMEM70 and TMEM242.

It is found in the mitochondrion. Its subcellular location is the mitochondrion matrix. As part of the MCIA complex, involved in the assembly of the mitochondrial complex I. In Mus musculus (Mouse), this protein is Complex I intermediate-associated protein 30, mitochondrial.